The primary structure comprises 443 residues: Probable D-serine dehydratase (443 aa).

Lys116 bears the N6-(pyridoxal phosphate)lysine mark.

Belongs to the serine/threonine dehydratase family. DsdA subfamily. It depends on pyridoxal 5'-phosphate as a cofactor.

The catalysed reaction is D-serine = pyruvate + NH4(+). This chain is Probable D-serine dehydratase, found in Bacillus cereus (strain AH187).